The primary structure comprises 445 residues: Tubulin beta-3 chain (445 aa).

Positions 1-4 (MREI) match the MREI motif motif. Positions 11, 69, 138, 142, 143, 144, 204, and 226 each coordinate GTP. Glu69 is a Mg(2+) binding site. Positions 425–445 (YQDATAEEEGEFEEEAEEEAE) are disordered. Positions 429 to 445 (TAEEEGEFEEEAEEEAE) are enriched in acidic residues. A 5-glutamyl polyglutamate modification is found at Glu438.

This sequence belongs to the tubulin family. As to quaternary structure, dimer of alpha and beta chains. A typical microtubule is a hollow water-filled tube with an outer diameter of 25 nm and an inner diameter of 15 nM. Alpha-beta heterodimers associate head-to-tail to form protofilaments running lengthwise along the microtubule wall with the beta-tubulin subunit facing the microtubule plus end conferring a structural polarity. Microtubules usually have 13 protofilaments but different protofilament numbers can be found in some organisms and specialized cells. The cofactor is Mg(2+). Some glutamate residues at the C-terminus are polyglycylated, resulting in polyglycine chains on the gamma-carboxyl group. Glycylation is mainly limited to tubulin incorporated into axonemes (cilia and flagella) whereas glutamylation is prevalent in neuronal cells, centrioles, axonemes, and the mitotic spindle. Both modifications can coexist on the same protein on adjacent residues, and lowering polyglycylation levels increases polyglutamylation, and reciprocally. The precise function of polyglycylation is still unclear. In terms of processing, some glutamate residues at the C-terminus are polyglutamylated, resulting in polyglutamate chains on the gamma-carboxyl group. Polyglutamylation plays a key role in microtubule severing by spastin (SPAST). SPAST preferentially recognizes and acts on microtubules decorated with short polyglutamate tails: severing activity by SPAST increases as the number of glutamates per tubulin rises from one to eight, but decreases beyond this glutamylation threshold. In terms of tissue distribution, highly expressed in testis.

It is found in the cytoplasm. The protein resides in the cytoskeleton. Its function is as follows. Tubulin is the major constituent of microtubules, a cylinder consisting of laterally associated linear protofilaments composed of alpha- and beta-tubulin heterodimers. Microtubules grow by the addition of GTP-tubulin dimers to the microtubule end, where a stabilizing cap forms. Below the cap, tubulin dimers are in GDP-bound state, owing to GTPase activity of alpha-tubulin. TUBB3 plays a role in dorsal root ganglion axon projection towards the spinal cord. The polypeptide is Tubulin beta-3 chain (Gallus gallus (Chicken)).